We begin with the raw amino-acid sequence, 372 residues long: Chaperone protein DnaJ (372 aa).

The 66-residue stretch at 5-70 (DYYDLLEVSR…EKRAGYDRYG (66 aa)) folds into the J domain. A CR-type zinc finger spans residues 134 to 212 (GIQAPIHYVT…CGGSGRKRDE (79 aa)). The Zn(2+) site is built by Cys-147, Cys-150, Cys-164, Cys-167, Cys-186, Cys-189, Cys-200, and Cys-203. CXXCXGXG motif repeat units lie at residues 147–154 (CNTCQGTG), 164–171 (CNTCQGSG), 186–193 (CTTCYGEG), and 200–207 (CKKCGGSG).

It belongs to the DnaJ family. As to quaternary structure, homodimer. It depends on Zn(2+) as a cofactor.

The protein resides in the cytoplasm. Participates actively in the response to hyperosmotic and heat shock by preventing the aggregation of stress-denatured proteins and by disaggregating proteins, also in an autonomous, DnaK-independent fashion. Unfolded proteins bind initially to DnaJ; upon interaction with the DnaJ-bound protein, DnaK hydrolyzes its bound ATP, resulting in the formation of a stable complex. GrpE releases ADP from DnaK; ATP binding to DnaK triggers the release of the substrate protein, thus completing the reaction cycle. Several rounds of ATP-dependent interactions between DnaJ, DnaK and GrpE are required for fully efficient folding. Also involved, together with DnaK and GrpE, in the DNA replication of plasmids through activation of initiation proteins. This Wolbachia pipientis subsp. Culex pipiens (strain wPip) protein is Chaperone protein DnaJ.